The following is a 339-amino-acid chain: Anthranilate phosphoribosyltransferase (339 aa).

Residues Gly-82, 85-86, 92-95, 110-118, and Ser-122 contribute to the 5-phospho-alpha-D-ribose 1-diphosphate site; these read GD, NIST, and KHGNRGISS. Position 82 (Gly-82) interacts with anthranilate. Residue Ser-94 participates in Mg(2+) binding. Asn-113 lines the anthranilate pocket. Arg-168 is an anthranilate binding site. Positions 227 and 228 each coordinate Mg(2+).

Belongs to the anthranilate phosphoribosyltransferase family. Homodimer. It depends on Mg(2+) as a cofactor.

It carries out the reaction N-(5-phospho-beta-D-ribosyl)anthranilate + diphosphate = 5-phospho-alpha-D-ribose 1-diphosphate + anthranilate. Its pathway is amino-acid biosynthesis; L-tryptophan biosynthesis; L-tryptophan from chorismate: step 2/5. Catalyzes the transfer of the phosphoribosyl group of 5-phosphorylribose-1-pyrophosphate (PRPP) to anthranilate to yield N-(5'-phosphoribosyl)-anthranilate (PRA). The chain is Anthranilate phosphoribosyltransferase from Vesicomyosocius okutanii subsp. Calyptogena okutanii (strain HA).